The sequence spans 333 residues: D-lactate dehydrogenase (333 aa).

NAD(+) contacts are provided by residues 156-157, Asp-176, 207-208, Asn-213, 234-236, and Asp-260; these read HI, VP, and VSR. The active site involves Arg-236. Residue Glu-265 is part of the active site. The active-site Proton donor is His-297.

The protein belongs to the D-isomer specific 2-hydroxyacid dehydrogenase family. Homodimer.

The catalysed reaction is (R)-lactate + NAD(+) = pyruvate + NADH + H(+). The polypeptide is D-lactate dehydrogenase (ldhA) (Lactobacillus delbrueckii subsp. bulgaricus (strain ATCC 11842 / DSM 20081 / BCRC 10696 / JCM 1002 / NBRC 13953 / NCIMB 11778 / NCTC 12712 / WDCM 00102 / Lb 14)).